A 239-amino-acid chain; its full sequence is Probable transcriptional regulatory protein Veis_4238 (239 aa).

Residues 1-22 form a disordered region; it reads MAGHSKWANIQHRKGRQDEKRG.

It belongs to the TACO1 family.

It is found in the cytoplasm. This chain is Probable transcriptional regulatory protein Veis_4238, found in Verminephrobacter eiseniae (strain EF01-2).